The following is a 309-amino-acid chain: Succinate--CoA ligase [ADP-forming] subunit alpha-2, mitochondrial (309 aa).

A hydrogenosome-targeting transit peptide spans 1–9; that stretch reads MLSSSFERN. Residues Lys54 and 107–109 contribute to the CoA site; that span reads ITE. Position 171 (Tyr171) interacts with substrate. Catalysis depends on His262, which acts as the Tele-phosphohistidine intermediate.

Belongs to the succinate/malate CoA ligase alpha subunit family. As to quaternary structure, heterodimer of an alpha and a beta subunit.

Its subcellular location is the hydrogenosome lumen. The catalysed reaction is succinate + ATP + CoA = succinyl-CoA + ADP + phosphate. The protein operates within carbohydrate metabolism; tricarboxylic acid cycle; succinate from succinyl-CoA (ligase route): step 1/1. Succinyl-CoA synthetase functions in the citric acid cycle (TCA), coupling the hydrolysis of succinyl-CoA to the synthesis of ATP and thus represents the only step of substrate-level phosphorylation in the TCA. The alpha subunit of the enzyme binds the substrates coenzyme A and phosphate, while succinate binding and nucleotide specificity is provided by the beta subunit. This chain is Succinate--CoA ligase [ADP-forming] subunit alpha-2, mitochondrial (ALPHA-SCS2), found in Trichomonas vaginalis.